Consider the following 238-residue polypeptide: Female-specific protein 800 (238 aa).

Low complexity predominate over residues 35–50; sequence YSYHHTYNNNNQGNYQ. Disordered stretches follow at residues 35–112 and 166–204; these read YSYH…KGGS and NKRKITKSEKNGRYIKKDHMNNRDSNTNINEKPEYSKSP. The span at 97–106 shows a compositional bias: polar residues; it reads RNDQIQSRGN. Positions 171–187 are enriched in basic and acidic residues; sequence TKSEKNGRYIKKDHMNN.

Functionally, FS800 is likely to have some function in the production or maintenance of the schistosome egg. The polypeptide is Female-specific protein 800 (Schistosoma mansoni (Blood fluke)).